The following is a 346-amino-acid chain: MEKEATPQQQPPVVDPARLKQLNLAIETLEKQFGKGAIMRLGDDSAVMHVQVISTGSMALDYALGVGGLPRGRVTEIYGPESSGKTTLALHAIAEAQKNGGIAALVDAEHAFDPTYARKLGVDINALLVSQPESGEQALSIVETLVRSGAVDIIVIDSVAALVPQAELEGEMGDSVVGLQARLMSQALRKLTGAISKSSSVCLFINQLRDKIGVMYGSPETTTGGKALKFYSSVRLDIRKIAQIKDGEELVGNRTKVKVVKNKVAPPFKTAEFDILYGEGISVLGELIDLAVEFGIIKKSGAWFSYGTEKLGQGRENVKKLLKEDETLRNTIRQQVRDMLTGAPTA.

79–86 provides a ligand contact to ATP; that stretch reads GPESSGKT.

It belongs to the RecA family.

The protein localises to the cytoplasm. Functionally, can catalyze the hydrolysis of ATP in the presence of single-stranded DNA, the ATP-dependent uptake of single-stranded DNA by duplex DNA, and the ATP-dependent hybridization of homologous single-stranded DNAs. It interacts with LexA causing its activation and leading to its autocatalytic cleavage. This is Protein RecA from Chlorobaculum tepidum (strain ATCC 49652 / DSM 12025 / NBRC 103806 / TLS) (Chlorobium tepidum).